We begin with the raw amino-acid sequence, 192 residues long: UPF0312 protein Avin_03250 (192 aa).

The first 23 residues, 1-23 (MLKKTLAALALGSALLGAGQAMA), serve as a signal peptide directing secretion.

Belongs to the UPF0312 family. Type 1 subfamily.

The protein resides in the periplasm. This chain is UPF0312 protein Avin_03250, found in Azotobacter vinelandii (strain DJ / ATCC BAA-1303).